We begin with the raw amino-acid sequence, 326 residues long: Protein GVP36 (326 aa).

Residue Ser2 is modified to N-acetylserine. Phosphoserine is present on Ser2. Glycyl lysine isopeptide (Lys-Gly) (interchain with G-Cter in ubiquitin) cross-links involve residues Lys13, Lys305, and Lys313. Positions 299–326 (AEEPEAKPEVAEEEKPQTAISMNDEDDA) are disordered. Over residues 302 to 314 (PEAKPEVAEEEKP) the composition is skewed to basic and acidic residues. Position 319 is a phosphoserine (Ser319).

Its subcellular location is the golgi apparatus membrane. This Saccharomyces cerevisiae (strain ATCC 204508 / S288c) (Baker's yeast) protein is Protein GVP36 (GVP36).